The chain runs to 50 residues: Large ribosomal subunit protein bL33 (50 aa).

This sequence belongs to the bacterial ribosomal protein bL33 family.

This is Large ribosomal subunit protein bL33 from Sulfurimonas denitrificans (strain ATCC 33889 / DSM 1251) (Thiomicrospira denitrificans (strain ATCC 33889 / DSM 1251)).